A 483-amino-acid chain; its full sequence is Auxin transporter-like protein 2 (483 aa).

Topologically, residues 1–53 (MENGEKAAETVVVGNYVEMEKDGKALDIKSKLSDMFWHGGSAYDAWFSCASNQ) are cytoplasmic. A helical membrane pass occupies residues 54–71 (VAQVLLTLPYSFSQLGML). Topologically, residues 72-73 (SG) are extracellular. The chain crosses the membrane as a helical span at residues 74 to 94 (ILFQLFYGILGSWTAYLISIL). Over 95-130 (YVEYRTRKEREKVNFRNHVIQWFEVLDGLLGKHWRN) the chain is Cytoplasmic. Residues 131-151 (VGLAFNCTFLLFGSVIQLIAC) form a helical membrane-spanning segment. At 152 to 166 (ASNIYYINDNLDKRT) the chain is on the extracellular side. The helical transmembrane segment at 167 to 187 (WTYIFGACCATTVFIPSFHNY) threads the bilayer. The Cytoplasmic portion of the chain corresponds to 188–190 (RIW). A helical transmembrane segment spans residues 191-211 (SFLGLLMTTYTAWYLTIASIL). Residues 212–226 (HGQVEGVKHSGPSKL) lie on the Extracellular side of the membrane. The chain crosses the membrane as a helical span at residues 227–247 (VLYFTGATNILYTFGGHAVTV). Residues 248 to 261 (EIMHAMWKPQKFKS) lie on the Cytoplasmic side of the membrane. Residues 262–282 (IYLFATLYVLTLTLPSASAVY) form a helical membrane-spanning segment. Topologically, residues 283–306 (WAFGDLLLNHSNAFALLPKNLYRD) are extracellular. Asn291 carries an N-linked (GlcNAc...) asparagine glycan. The helical transmembrane segment at 307 to 327 (FAVVLMLIHQFITFGFACTPL) threads the bilayer. The Cytoplasmic segment spans residues 328–350 (YFVWEKLIGMHECRSMCKRAAAR). The chain crosses the membrane as a helical span at residues 351-371 (LPVVIPIWFLAIIFPFFGPIN). Residues 372–374 (STV) lie on the Extracellular side of the membrane. The chain crosses the membrane as a helical span at residues 375 to 395 (GSLLVSFTVYIIPALAHIFTF). The Cytoplasmic portion of the chain corresponds to 396 to 422 (RSSAARENAVEQPPRFLGRWTGAFTIN). A helical transmembrane segment spans residues 423-443 (AFIVVWVFIVGFGFGGWASMI). Residues 444–483 (NFVHQIDTFGLFTKCYQCPPPVMVSPPPISHPHFNHTHGL) lie on the Extracellular side of the membrane. Asn478 is a glycosylation site (N-linked (GlcNAc...) asparagine).

It belongs to the amino acid/polyamine transporter 2 family. Amino acid/auxin permease (AAAP) (TC 2.A.18.1) subfamily.

It localises to the cell membrane. Functionally, carrier protein involved in proton-driven auxin influx. Mediates the formation of auxin gradient from developing leaves (site of auxin biosynthesis) to tips by contributing to the loading of auxin in vascular tissues and facilitating acropetal (base to tip) auxin transport within inner tissues of the root apex, and basipetal (tip to base) auxin transport within outer tissues of the root apex. This chain is Auxin transporter-like protein 2 (LAX2), found in Arabidopsis thaliana (Mouse-ear cress).